A 317-amino-acid polypeptide reads, in one-letter code: Ribosomal protein L11 methyltransferase (317 aa).

S-adenosyl-L-methionine-binding residues include Thr-158, Gly-179, Asp-201, and Asn-244.

The protein belongs to the methyltransferase superfamily. PrmA family.

The protein resides in the cytoplasm. It catalyses the reaction L-lysyl-[protein] + 3 S-adenosyl-L-methionine = N(6),N(6),N(6)-trimethyl-L-lysyl-[protein] + 3 S-adenosyl-L-homocysteine + 3 H(+). Methylates ribosomal protein L11. In Streptococcus thermophilus (strain CNRZ 1066), this protein is Ribosomal protein L11 methyltransferase.